The chain runs to 279 residues: Probable endonuclease 4 (279 aa).

9 residues coordinate Zn(2+): His-74, His-112, Glu-147, Asp-180, His-183, His-214, Asp-227, His-229, and Glu-259.

Belongs to the AP endonuclease 2 family. Requires Zn(2+) as cofactor.

The enzyme catalyses Endonucleolytic cleavage to 5'-phosphooligonucleotide end-products.. Its function is as follows. Endonuclease IV plays a role in DNA repair. It cleaves phosphodiester bonds at apurinic or apyrimidinic (AP) sites, generating a 3'-hydroxyl group and a 5'-terminal sugar phosphate. This Mycoplasma mobile (strain ATCC 43663 / 163K / NCTC 11711) (Mesomycoplasma mobile) protein is Probable endonuclease 4.